We begin with the raw amino-acid sequence, 829 residues long: DNA topoisomerase 1 (829 aa).

Residues 1 to 248 are disordered; it reads MSEDHVQNDS…AKGNEEGVKK (248 aa). A compositionally biased stretch (basic residues) spans 22 to 36; sequence HKHKKDKEHRHKEHK. Basic and acidic residues-rich tracts occupy residues 37–58, 68–159, and 193–220; these read KDKDREKSKHNNSEHRDPSEKK, KHRE…EKMK, and KENKAMKRPREDDEDYKPKKIKSEDDKK. Interaction with DNA regions lie at residues 481-482, 544-549, and 641-643; these read KY, RAGNEK, and TAK. A Topo IB-type catalytic domain is found at 488-821; the sequence is SSRIKGEKDW…SIWQTTTSNF (334 aa). Residue Tyr779 is the O-(3'-phospho-DNA)-tyrosine intermediate of the active site.

Belongs to the type IB topoisomerase family. In terms of assembly, monomer.

The protein resides in the nucleus. The catalysed reaction is ATP-independent breakage of single-stranded DNA, followed by passage and rejoining.. In terms of biological role, releases the supercoiling and torsional tension of DNA introduced during the DNA replication and transcription by transiently cleaving and rejoining one strand of the DNA duplex. Introduces a single-strand break via transesterification at a target site in duplex DNA. The scissile phosphodiester is attacked by the catalytic tyrosine of the enzyme, resulting in the formation of a DNA-(3'-phosphotyrosyl)-enzyme intermediate and the expulsion of a 5'-OH DNA strand. TThe free DNA strand then rotates around the intact phosphodiester bond on the opposing strand, thus removing DNA supercoils. Finally, in the religation step, the DNA 5'-OH attacks the covalent intermediate to expel the active-site tyrosine and restore the DNA phosphodiester backbone. May play a role in the circadian transcription of the core circadian clock component BMAL1. The sequence is that of DNA topoisomerase 1 (top1) from Xenopus laevis (African clawed frog).